The sequence spans 145 residues: Protein SprT-like (145 aa).

Positions 4-140 (TNYVQEVSLA…VCGNCHGKLM (137 aa)) constitute a SprT-like domain. His64 provides a ligand contact to Zn(2+). The active site involves Glu65. Residue His68 participates in Zn(2+) binding.

This sequence belongs to the SprT family. Requires Zn(2+) as cofactor.

The protein resides in the cytoplasm. The polypeptide is Protein SprT-like (Streptococcus pyogenes serotype M3 (strain SSI-1)).